The following is a 946-amino-acid chain: Inter-alpha-trypsin inhibitor heavy chain H2 (946 aa).

The first 18 residues, 1-18, serve as a signal peptide directing secretion; it reads MQRLACVLIWLFLLEEQA. A propeptide spanning residues 19–54 is cleaved from the precursor; sequence FEIPANEYSEFAGYSNLVELAPDKFPFVQENRRYQR. In terms of domain architecture, VIT spans 56–185; sequence LPEESGEMTD…KVQFELHYQE (130 aa). Phosphoserine is present on S60. N-linked (GlcNAc...) asparagine glycosylation is found at N118 and N263. 4-carboxyglutamate occurs at positions 282 and 283. The region spanning 308–468 is the VWFA domain; the sequence is PKNILFVIDV…YDFLKRLSNE (161 aa). N445 carries an N-linked (GlcNAc...) asparagine glycan. Position 466 is a phosphoserine (S466). A glycan (N-linked (GlcNAc...) asparagine) is linked at N578. D702 is modified (aspartate 1-(chondroitin 4-sulfate)-ester). Positions 703–946 are excised as a propeptide; sequence PHFIIYLPKS…PQLYSFLKRP (244 aa). Position 886 is a phosphoserine (S886).

The protein belongs to the ITIH family. As to quaternary structure, I-alpha-I plasma protease inhibitors are assembled from one or two heavy chains (HC) and one light chain, bikunin. Inter-alpha-inhibitor (I-alpha-I) is composed of ITIH1/HC1, ITIH2/HC2 and bikunin. Heavy chains are linked to bikunin via chondroitin 4-sulfate esterified to the alpha-carboxyl of the C-terminal aspartate after propeptide cleavage. Post-translationally, phosphorylated by FAM20C in the extracellular medium.

It localises to the secreted. Its function is as follows. May act as a carrier of hyaluronan in serum or as a binding protein between hyaluronan and other matrix protein, including those on cell surfaces in tissues to regulate the localization, synthesis and degradation of hyaluronan which are essential to cells undergoing biological processes. This Mesocricetus auratus (Golden hamster) protein is Inter-alpha-trypsin inhibitor heavy chain H2 (ITIH2).